We begin with the raw amino-acid sequence, 358 residues long: Uroporphyrinogen decarboxylase (358 aa).

Substrate-binding positions include R29–R33, D79, Y156, T211, and H329.

This sequence belongs to the uroporphyrinogen decarboxylase family. In terms of assembly, homodimer.

Its subcellular location is the cytoplasm. The enzyme catalyses uroporphyrinogen III + 4 H(+) = coproporphyrinogen III + 4 CO2. Its pathway is porphyrin-containing compound metabolism; protoporphyrin-IX biosynthesis; coproporphyrinogen-III from 5-aminolevulinate: step 4/4. Catalyzes the decarboxylation of four acetate groups of uroporphyrinogen-III to yield coproporphyrinogen-III. The sequence is that of Uroporphyrinogen decarboxylase from Idiomarina loihiensis (strain ATCC BAA-735 / DSM 15497 / L2-TR).